The chain runs to 370 residues: Anhydro-N-acetylmuramic acid kinase (370 aa).

Residue G13–D20 participates in ATP binding.

Belongs to the anhydro-N-acetylmuramic acid kinase family.

The catalysed reaction is 1,6-anhydro-N-acetyl-beta-muramate + ATP + H2O = N-acetyl-D-muramate 6-phosphate + ADP + H(+). It participates in amino-sugar metabolism; 1,6-anhydro-N-acetylmuramate degradation. It functions in the pathway cell wall biogenesis; peptidoglycan recycling. In terms of biological role, catalyzes the specific phosphorylation of 1,6-anhydro-N-acetylmuramic acid (anhMurNAc) with the simultaneous cleavage of the 1,6-anhydro ring, generating MurNAc-6-P. Is required for the utilization of anhMurNAc either imported from the medium or derived from its own cell wall murein, and thus plays a role in cell wall recycling. This is Anhydro-N-acetylmuramic acid kinase from Vibrio cholerae serotype O1 (strain ATCC 39315 / El Tor Inaba N16961).